Reading from the N-terminus, the 332-residue chain is Glycerol-3-phosphate dehydrogenase [NAD(P)+] (332 aa).

NADPH contacts are provided by serine 11, tryptophan 12, arginine 32, arginine 33, and lysine 106. Lysine 106 and glycine 136 together coordinate sn-glycerol 3-phosphate. Residue alanine 140 participates in NADPH binding. The sn-glycerol 3-phosphate site is built by lysine 191, aspartate 244, serine 254, arginine 255, and asparagine 256. Lysine 191 serves as the catalytic Proton acceptor. NADPH is bound at residue arginine 255. Residues valine 280 and glutamate 282 each coordinate NADPH.

This sequence belongs to the NAD-dependent glycerol-3-phosphate dehydrogenase family.

The protein localises to the cytoplasm. It catalyses the reaction sn-glycerol 3-phosphate + NAD(+) = dihydroxyacetone phosphate + NADH + H(+). The enzyme catalyses sn-glycerol 3-phosphate + NADP(+) = dihydroxyacetone phosphate + NADPH + H(+). It functions in the pathway membrane lipid metabolism; glycerophospholipid metabolism. Functionally, catalyzes the reduction of the glycolytic intermediate dihydroxyacetone phosphate (DHAP) to sn-glycerol 3-phosphate (G3P), the key precursor for phospholipid synthesis. The sequence is that of Glycerol-3-phosphate dehydrogenase [NAD(P)+] from Corynebacterium jeikeium (strain K411).